The following is a 363-amino-acid chain: Chorismate synthase (363 aa).

Residues R48 and R54 each contribute to the NADP(+) site. Residues R125–S127, N238–A239, G278, K293–S297, and R319 each bind FMN.

It belongs to the chorismate synthase family. Homotetramer. FMNH2 serves as cofactor.

The enzyme catalyses 5-O-(1-carboxyvinyl)-3-phosphoshikimate = chorismate + phosphate. It participates in metabolic intermediate biosynthesis; chorismate biosynthesis; chorismate from D-erythrose 4-phosphate and phosphoenolpyruvate: step 7/7. In terms of biological role, catalyzes the anti-1,4-elimination of the C-3 phosphate and the C-6 proR hydrogen from 5-enolpyruvylshikimate-3-phosphate (EPSP) to yield chorismate, which is the branch point compound that serves as the starting substrate for the three terminal pathways of aromatic amino acid biosynthesis. This reaction introduces a second double bond into the aromatic ring system. The sequence is that of Chorismate synthase from Acidithiobacillus ferrooxidans (strain ATCC 23270 / DSM 14882 / CIP 104768 / NCIMB 8455) (Ferrobacillus ferrooxidans (strain ATCC 23270)).